The following is a 175-amino-acid chain: Lipoprotein signal peptidase (175 aa).

4 helical membrane-spanning segments follow: residues Leu25 to Val45, Val56 to Ala76, Trp81 to Leu101, and Phe110 to Val130. Active-site residues include Asp136 and Asp154. Residues His146–Val166 traverse the membrane as a helical segment.

This sequence belongs to the peptidase A8 family.

It localises to the cell inner membrane. The catalysed reaction is Release of signal peptides from bacterial membrane prolipoproteins. Hydrolyzes -Xaa-Yaa-Zaa-|-(S,diacylglyceryl)Cys-, in which Xaa is hydrophobic (preferably Leu), and Yaa (Ala or Ser) and Zaa (Gly or Ala) have small, neutral side chains.. It participates in protein modification; lipoprotein biosynthesis (signal peptide cleavage). Its function is as follows. This protein specifically catalyzes the removal of signal peptides from prolipoproteins. The sequence is that of Lipoprotein signal peptidase from Cupriavidus necator (strain ATCC 17699 / DSM 428 / KCTC 22496 / NCIMB 10442 / H16 / Stanier 337) (Ralstonia eutropha).